Here is a 765-residue protein sequence, read N- to C-terminus: Probable exo-1,4-beta-xylosidase bxlB (765 aa).

An N-terminal signal peptide occupies residues 1–25; sequence MYSSNSRRAASILACIVSLTQLGFA. N-linked (GlcNAc...) asparagine glycans are attached at residues asparagine 67 and asparagine 107. Aspartate 293 is an active-site residue. Asparagine 345, asparagine 412, asparagine 423, asparagine 464, and asparagine 761 each carry an N-linked (GlcNAc...) asparagine glycan.

The protein belongs to the glycosyl hydrolase 3 family.

Its subcellular location is the secreted. The enzyme catalyses Hydrolysis of (1-&gt;4)-beta-D-xylans, to remove successive D-xylose residues from the non-reducing termini.. Its pathway is glycan degradation; xylan degradation. Xylan 1,4-beta-xylosidase involved in the hydrolysis of xylan, a major structural heterogeneous polysaccharide found in plant biomass representing the second most abundant polysaccharide in the biosphere, after cellulose. In Aspergillus terreus (strain NIH 2624 / FGSC A1156), this protein is Probable exo-1,4-beta-xylosidase bxlB (bxlB).